The chain runs to 484 residues: UDP-N-acetylmuramate--L-alanine ligase (484 aa).

126–132 (GTHGKTT) lines the ATP pocket.

It belongs to the MurCDEF family.

The protein resides in the cytoplasm. It catalyses the reaction UDP-N-acetyl-alpha-D-muramate + L-alanine + ATP = UDP-N-acetyl-alpha-D-muramoyl-L-alanine + ADP + phosphate + H(+). It participates in cell wall biogenesis; peptidoglycan biosynthesis. Cell wall formation. This is UDP-N-acetylmuramate--L-alanine ligase from Aeromonas hydrophila subsp. hydrophila (strain ATCC 7966 / DSM 30187 / BCRC 13018 / CCUG 14551 / JCM 1027 / KCTC 2358 / NCIMB 9240 / NCTC 8049).